Here is a 101-residue protein sequence, read N- to C-terminus: Small ribosomal subunit protein uS10 (101 aa).

The protein belongs to the universal ribosomal protein uS10 family. In terms of assembly, part of the 30S ribosomal subunit.

In terms of biological role, involved in the binding of tRNA to the ribosomes. This is Small ribosomal subunit protein uS10 from Mycobacteroides abscessus (strain ATCC 19977 / DSM 44196 / CCUG 20993 / CIP 104536 / JCM 13569 / NCTC 13031 / TMC 1543 / L948) (Mycobacterium abscessus).